The following is a 381-amino-acid chain: Phenylalanine dehydrogenase (381 aa).

An NAD(+)-binding site is contributed by arginine 55. L-phenylalanine is bound at residue lysine 79. Lysine 91 is an active-site residue. Residues aspartate 126, serine 157, threonine 161, 191–197 (GLGKVGY), 214–215 (DI), 254–255 (AM), and 275–277 (SAN) each bind NAD(+). Asparagine 277 is a binding site for L-phenylalanine.

It belongs to the Glu/Leu/Phe/Val dehydrogenases family.

The catalysed reaction is L-phenylalanine + NAD(+) + H2O = 3-phenylpyruvate + NH4(+) + NADH + H(+). Its pathway is amino-acid biosynthesis; L-phenylalanine biosynthesis; L-phenylalanine from phenylpyruvate (PDH route): step 1/1. In terms of biological role, catalyzes the reversible NAD(+)-dependent oxidative deamination of L-phenylalanine to phenylpyruvate. In Lysinibacillus sphaericus (Bacillus sphaericus), this protein is Phenylalanine dehydrogenase.